The following is a 92-amino-acid chain: Putative pterin-4-alpha-carbinolamine dehydratase (92 aa).

The protein belongs to the pterin-4-alpha-carbinolamine dehydratase family.

The catalysed reaction is (4aS,6R)-4a-hydroxy-L-erythro-5,6,7,8-tetrahydrobiopterin = (6R)-L-erythro-6,7-dihydrobiopterin + H2O. The chain is Putative pterin-4-alpha-carbinolamine dehydratase from Acidobacterium capsulatum (strain ATCC 51196 / DSM 11244 / BCRC 80197 / JCM 7670 / NBRC 15755 / NCIMB 13165 / 161).